A 372-amino-acid chain; its full sequence is NAD(P)H-quinone oxidoreductase subunit 1 (372 aa).

The next 8 membrane-spanning stretches (helical) occupy residues 29-49 (WLPF…LVTV), 97-117 (LLFT…YLVV), 128-148 (LGVA…GLLM), 176-196 (LALA…IDIV), 204-224 (ILGW…IAVL), 254-274 (FALY…LVAV), 308-328 (TLGI…AVLL), and 351-371 (VALV…FAFG).

Belongs to the complex I subunit 1 family. As to quaternary structure, NDH-1 is composed of at least 11 different subunits.

The protein localises to the cellular thylakoid membrane. It catalyses the reaction a plastoquinone + NADH + (n+1) H(+)(in) = a plastoquinol + NAD(+) + n H(+)(out). The enzyme catalyses a plastoquinone + NADPH + (n+1) H(+)(in) = a plastoquinol + NADP(+) + n H(+)(out). NDH-1 shuttles electrons from an unknown electron donor, via FMN and iron-sulfur (Fe-S) centers, to quinones in the respiratory and/or the photosynthetic chain. The immediate electron acceptor for the enzyme in this species is believed to be plastoquinone. Couples the redox reaction to proton translocation, and thus conserves the redox energy in a proton gradient. The chain is NAD(P)H-quinone oxidoreductase subunit 1 from Trichodesmium erythraeum (strain IMS101).